We begin with the raw amino-acid sequence, 412 residues long: DNA replication and repair protein RecF (412 aa).

Residue 30-37 (GKNGLGKT) participates in ATP binding.

It belongs to the RecF family.

Its subcellular location is the cytoplasm. Functionally, the RecF protein is involved in DNA metabolism; it is required for DNA replication and normal SOS inducibility. RecF binds preferentially to single-stranded, linear DNA. It also seems to bind ATP. The sequence is that of DNA replication and repair protein RecF from Bifidobacterium longum subsp. infantis (strain ATCC 15697 / DSM 20088 / JCM 1222 / NCTC 11817 / S12).